A 57-amino-acid polypeptide reads, in one-letter code: Defensin-like protein 302 (57 aa).

Disulfide bonds link cysteine 19–cysteine 39, cysteine 26–cysteine 44, and cysteine 32–cysteine 46.

It belongs to the DEFL family.

The sequence is that of Defensin-like protein 302 from Arabidopsis thaliana (Mouse-ear cress).